We begin with the raw amino-acid sequence, 464 residues long: L-cystine uptake protein TcyP (464 aa).

10 helical membrane passes run Thr-3–Met-23, Val-34–Pro-54, Tyr-73–Phe-93, Gly-107–Ala-127, Pro-184–Val-204, Ile-225–Met-245, Phe-263–Ala-283, Ala-347–Leu-367, Phe-371–Gly-391, and Phe-395–Ile-415.

Belongs to the dicarboxylate/amino acid:cation symporter (DAACS) (TC 2.A.23) family.

It localises to the membrane. Mediates uptake of L-cystine, the oxidized form of L-cysteine. This Bacillus cereus (strain ATCC 10987 / NRS 248) protein is L-cystine uptake protein TcyP.